We begin with the raw amino-acid sequence, 378 residues long: P2X receptor A (378 aa).

Over 1-27 (MGFSFDWDDIFQYSTVKIVRIRDRRLG) the chain is Cytoplasmic. A helical membrane pass occupies residues 28–48 (ILHLSFLVGIVAYIVVYSAII). At 49–307 (KKGYLFTEVP…IQTGTIGSFH (259 aa)) the chain is on the lumenal side. A pore-forming motif region spans residues 290–303 (RHGIRVIFIQTGTI). A helical membrane pass occupies residues 308 to 328 (FQTLLLTLVSGLGLLAVATTV). Residues 329-378 (VDQLAIRLLPQRKSYSSLKFQVTESMSNPMKKRITTDEGEDVLYTRIEGL) are Cytoplasmic-facing.

It belongs to the P2X receptor family.

The protein resides in the contractile vacuole membrane. In terms of biological role, P2X receptors are ATP-gated ion channels that play a role in intracellular calcium signaling. Not required for the purinergic response to extracellular nucleotides. Inward currents evoked by intracellular ATP and ATP analogs. Exclusively selective for ATP over other nucleotides. Insensitive to P2 receptor antagonists PPADS, suramin and 2',3'-O-(2,4,6-trinitrophenyl)-ATP but inhibited by nanomolar concentrations of copper and sodium ion. More permeable to ammonium than either sodium or potassium ions and less permeable to choline. It has been reported that p2xA is not essential for osmoregulation, however this information is in contradiction with another source which indicates that p2xA is required for osmoregulation. Found to be permeable to chloride ions. Inhibited by copper and sodium ions. The polypeptide is P2X receptor A (p2xA) (Dictyostelium discoideum (Social amoeba)).